The following is a 241-amino-acid chain: dTTP/UTP pyrophosphatase (241 aa).

At Ser-38 the chain carries Phosphoserine. Catalysis depends on Asp-105, which acts as the Proton acceptor.

The protein belongs to the Maf family. YhdE subfamily. Requires a divalent metal cation as cofactor.

The protein resides in the cytoplasm. It localises to the nucleus. It catalyses the reaction dTTP + H2O = dTMP + diphosphate + H(+). It carries out the reaction UTP + H2O = UMP + diphosphate + H(+). In terms of biological role, nucleoside triphosphate pyrophosphatase that hydrolyzes dTTP and UTP. May have a dual role in cell division arrest and in preventing the incorporation of modified nucleotides into cellular nucleic acids. The chain is dTTP/UTP pyrophosphatase from Schizosaccharomyces pombe (strain 972 / ATCC 24843) (Fission yeast).